The following is a 166-amino-acid chain: Small ribosomal subunit protein uS5 (166 aa).

Positions 11–74 constitute an S5 DRBM domain; that stretch reads LREKLVAINR…EKARANMKRV (64 aa).

The protein belongs to the universal ribosomal protein uS5 family. Part of the 30S ribosomal subunit. Contacts proteins S4 and S8.

In terms of biological role, with S4 and S12 plays an important role in translational accuracy. Functionally, located at the back of the 30S subunit body where it stabilizes the conformation of the head with respect to the body. This is Small ribosomal subunit protein uS5 from Alkalilimnicola ehrlichii (strain ATCC BAA-1101 / DSM 17681 / MLHE-1).